The sequence spans 388 residues: Calcium-binding and spermatid-specific protein 1 (388 aa).

A disordered region spans residues 1–20; that stretch reads MAEDGLPKIYSHPPAESTKT. Threonine 280 bears the Phosphothreonine; by CK2 mark. Residues serine 312 and serine 344 each carry the phosphoserine modification.

It localises to the cytoplasm. The protein resides in the mitochondrion inner membrane. It is found in the cell projection. The protein localises to the cilium. Its subcellular location is the flagellum. It localises to the cytoplasmic vesicle. The protein resides in the secretory vesicle. It is found in the acrosome. Functionally, calcium-binding protein. Essential for maintaining the structural integrity of the sperm flagella. This is Calcium-binding and spermatid-specific protein 1 (CABS1) from Bos taurus (Bovine).